The primary structure comprises 741 residues: Catalase-peroxidase (741 aa).

The first 23 residues, 1–23 (MLKKIVTALGMSGMLLASSNAIA), serve as a signal peptide directing secretion. A cross-link (tryptophyl-tyrosyl-methioninium (Trp-Tyr) (with M-249)) is located at residues 102–223 (WHDAGTYRIY…YAATQMGLIY (122 aa)). The active-site Proton acceptor is the histidine 103. Residues 223-249 (YVNPEGPDGKPDIKGAASEIRQAFRAM) constitute a cross-link (tryptophyl-tyrosyl-methioninium (Tyr-Met) (with W-102)). Residue histidine 264 coordinates heme b.

Belongs to the peroxidase family. Peroxidase/catalase subfamily. In terms of assembly, homodimer or homotetramer. The cofactor is heme b. Formation of the three residue Trp-Tyr-Met cross-link is important for the catalase, but not the peroxidase activity of the enzyme.

It carries out the reaction H2O2 + AH2 = A + 2 H2O. The enzyme catalyses 2 H2O2 = O2 + 2 H2O. Bifunctional enzyme with both catalase and broad-spectrum peroxidase activity. In Francisella tularensis subsp. tularensis (strain FSC 198), this protein is Catalase-peroxidase.